Consider the following 261-residue polypeptide: Cytochrome c oxidase subunit 3 (261 aa).

At 1-15 (MTKQMHAFHMVNPSP) the chain is on the mitochondrial matrix side. A helical transmembrane segment spans residues 16 to 34 (WPLTGAASAFMLTSGLAMW). The Mitochondrial intermembrane portion of the chain corresponds to 35 to 40 (FHKHSN). Residues 41-66 (TLIFLSMILMLLTMYQWWRDITREGT) form a helical membrane-spanning segment. Over 67-72 (FQGHHT) the chain is Mitochondrial matrix. The chain crosses the membrane as a helical span at residues 73–105 (SLVQKSLRYGMILFIVSEVCFFFGFFWTFYHSS). Residues 106 to 128 (LSPSPDLGMMWPPKGVIPLDPFE) lie on the Mitochondrial intermembrane side of the membrane. A helical transmembrane segment spans residues 129–152 (IPLLNTAILLGSGVSVTWAHHSLM). Residues 153–155 (EKT) lie on the Mitochondrial matrix side of the membrane. A helical membrane pass occupies residues 156–183 (HKDMVISLSITIILGIYFTLLQGMEYFN). Residues 184-190 (STFNISD) are Mitochondrial intermembrane-facing. The helical transmembrane segment at 191-223 (NAYGSTFFVATGFHGGHVIIGTLFLTVCLLRQL) threads the bilayer. At 224–232 (MFHFTSSHH) the chain is on the mitochondrial matrix side. The chain crosses the membrane as a helical span at residues 233–256 (FGFEAAAWYWHFVDVVWLFLFISI). Residues 257–261 (YWWGS) lie on the Mitochondrial intermembrane side of the membrane.

Belongs to the cytochrome c oxidase subunit 3 family. Component of the cytochrome c oxidase (complex IV, CIV), a multisubunit enzyme composed of 14 subunits. The complex is composed of a catalytic core of 3 subunits MT-CO1, MT-CO2 and MT-CO3, encoded in the mitochondrial DNA, and 11 supernumerary subunits COX4I, COX5A, COX5B, COX6A, COX6B, COX6C, COX7A, COX7B, COX7C, COX8 and NDUFA4, which are encoded in the nuclear genome. The complex exists as a monomer or a dimer and forms supercomplexes (SCs) in the inner mitochondrial membrane with NADH-ubiquinone oxidoreductase (complex I, CI) and ubiquinol-cytochrome c oxidoreductase (cytochrome b-c1 complex, complex III, CIII), resulting in different assemblies (supercomplex SCI(1)III(2)IV(1) and megacomplex MCI(2)III(2)IV(2)).

The protein resides in the mitochondrion inner membrane. The catalysed reaction is 4 Fe(II)-[cytochrome c] + O2 + 8 H(+)(in) = 4 Fe(III)-[cytochrome c] + 2 H2O + 4 H(+)(out). In terms of biological role, component of the cytochrome c oxidase, the last enzyme in the mitochondrial electron transport chain which drives oxidative phosphorylation. The respiratory chain contains 3 multisubunit complexes succinate dehydrogenase (complex II, CII), ubiquinol-cytochrome c oxidoreductase (cytochrome b-c1 complex, complex III, CIII) and cytochrome c oxidase (complex IV, CIV), that cooperate to transfer electrons derived from NADH and succinate to molecular oxygen, creating an electrochemical gradient over the inner membrane that drives transmembrane transport and the ATP synthase. Cytochrome c oxidase is the component of the respiratory chain that catalyzes the reduction of oxygen to water. Electrons originating from reduced cytochrome c in the intermembrane space (IMS) are transferred via the dinuclear copper A center (CU(A)) of subunit 2 and heme A of subunit 1 to the active site in subunit 1, a binuclear center (BNC) formed by heme A3 and copper B (CU(B)). The BNC reduces molecular oxygen to 2 water molecules using 4 electrons from cytochrome c in the IMS and 4 protons from the mitochondrial matrix. The protein is Cytochrome c oxidase subunit 3 (MT-CO3) of Myxine glutinosa (Atlantic hagfish).